The primary structure comprises 601 residues: Arginine--tRNA ligase (601 aa).

The short motif at 135 to 145 is the 'HIGH' region element; the sequence is ANPTGPLHLGH.

Belongs to the class-I aminoacyl-tRNA synthetase family. As to quaternary structure, monomer.

It is found in the cytoplasm. The catalysed reaction is tRNA(Arg) + L-arginine + ATP = L-arginyl-tRNA(Arg) + AMP + diphosphate. The protein is Arginine--tRNA ligase of Gloeobacter violaceus (strain ATCC 29082 / PCC 7421).